The primary structure comprises 331 residues: Methionyl-tRNA formyltransferase (331 aa).

Residue 110-113 coordinates (6S)-5,6,7,8-tetrahydrofolate; sequence SLLP. Residues 312-331 are disordered; sequence HAPAERVSAAGSPAGAGGAP.

It belongs to the Fmt family.

The catalysed reaction is L-methionyl-tRNA(fMet) + (6R)-10-formyltetrahydrofolate = N-formyl-L-methionyl-tRNA(fMet) + (6S)-5,6,7,8-tetrahydrofolate + H(+). Its function is as follows. Attaches a formyl group to the free amino group of methionyl-tRNA(fMet). The formyl group appears to play a dual role in the initiator identity of N-formylmethionyl-tRNA by promoting its recognition by IF2 and preventing the misappropriation of this tRNA by the elongation apparatus. The chain is Methionyl-tRNA formyltransferase from Frankia alni (strain DSM 45986 / CECT 9034 / ACN14a).